The chain runs to 65 residues: Antitoxin VapB32 (65 aa).

A disordered region spans residues alanine 46 to arginine 65.

In terms of biological role, antitoxin component of a type II toxin-antitoxin (TA) system. This chain is Antitoxin VapB32 (vapB32), found in Mycobacterium tuberculosis (strain CDC 1551 / Oshkosh).